The sequence spans 89 residues: Small ribosomal subunit protein uS15 (89 aa).

It belongs to the universal ribosomal protein uS15 family. As to quaternary structure, part of the 30S ribosomal subunit. Forms a bridge to the 50S subunit in the 70S ribosome, contacting the 23S rRNA.

In terms of biological role, one of the primary rRNA binding proteins, it binds directly to 16S rRNA where it helps nucleate assembly of the platform of the 30S subunit by binding and bridging several RNA helices of the 16S rRNA. Functionally, forms an intersubunit bridge (bridge B4) with the 23S rRNA of the 50S subunit in the ribosome. The chain is Small ribosomal subunit protein uS15 from Prosthecochloris aestuarii (strain DSM 271 / SK 413).